A 156-amino-acid polypeptide reads, in one-letter code: ATP synthase subunit b (156 aa).

The helical transmembrane segment at 7–29 (LLGQAISFALFVWFCIKFVWPPL) threads the bilayer.

Belongs to the ATPase B chain family. F-type ATPases have 2 components, F(1) - the catalytic core - and F(0) - the membrane proton channel. F(1) has five subunits: alpha(3), beta(3), gamma(1), delta(1), epsilon(1). F(0) has three main subunits: a(1), b(2) and c(10-14). The alpha and beta chains form an alternating ring which encloses part of the gamma chain. F(1) is attached to F(0) by a central stalk formed by the gamma and epsilon chains, while a peripheral stalk is formed by the delta and b chains.

The protein localises to the cell inner membrane. Functionally, f(1)F(0) ATP synthase produces ATP from ADP in the presence of a proton or sodium gradient. F-type ATPases consist of two structural domains, F(1) containing the extramembraneous catalytic core and F(0) containing the membrane proton channel, linked together by a central stalk and a peripheral stalk. During catalysis, ATP synthesis in the catalytic domain of F(1) is coupled via a rotary mechanism of the central stalk subunits to proton translocation. Component of the F(0) channel, it forms part of the peripheral stalk, linking F(1) to F(0). This is ATP synthase subunit b from Shewanella sp. (strain W3-18-1).